Consider the following 119-residue polypeptide: Holo-[acyl-carrier-protein] synthase (119 aa).

2 residues coordinate Mg(2+): Asp8 and Glu58.

The protein belongs to the P-Pant transferase superfamily. AcpS family. The cofactor is Mg(2+).

Its subcellular location is the cytoplasm. The catalysed reaction is apo-[ACP] + CoA = holo-[ACP] + adenosine 3',5'-bisphosphate + H(+). Transfers the 4'-phosphopantetheine moiety from coenzyme A to a Ser of acyl-carrier-protein. The sequence is that of Holo-[acyl-carrier-protein] synthase from Streptococcus thermophilus (strain CNRZ 1066).